The chain runs to 433 residues: tRNA-2-methylthio-N(6)-dimethylallyladenosine synthase (433 aa).

The region spanning 3 to 118 (KRLYIETLGC…IRDVIKQEKA (116 aa)) is the MTTase N-terminal domain. The [4Fe-4S] cluster site is built by cysteine 12, cysteine 49, cysteine 81, cysteine 150, cysteine 154, and cysteine 157. The region spanning 136–371 (RTSPYKAFIN…LHLQMLDSIS (236 aa)) is the Radical SAM core domain. In terms of domain architecture, TRAM spans 372 to 433 (EQEKDKVYEV…RLSLEGELVG (62 aa)).

Belongs to the methylthiotransferase family. MiaB subfamily. As to quaternary structure, monomer. Requires [4Fe-4S] cluster as cofactor.

It is found in the cytoplasm. It carries out the reaction N(6)-dimethylallyladenosine(37) in tRNA + (sulfur carrier)-SH + AH2 + 2 S-adenosyl-L-methionine = 2-methylsulfanyl-N(6)-dimethylallyladenosine(37) in tRNA + (sulfur carrier)-H + 5'-deoxyadenosine + L-methionine + A + S-adenosyl-L-homocysteine + 2 H(+). Functionally, catalyzes the methylthiolation of N6-(dimethylallyl)adenosine (i(6)A), leading to the formation of 2-methylthio-N6-(dimethylallyl)adenosine (ms(2)i(6)A) at position 37 in tRNAs that read codons beginning with uridine. In Nitratiruptor sp. (strain SB155-2), this protein is tRNA-2-methylthio-N(6)-dimethylallyladenosine synthase.